Here is a 303-residue protein sequence, read N- to C-terminus: Pyridoxal 5'-phosphate synthase subunit PdxS (303 aa).

A D-ribose 5-phosphate-binding site is contributed by D33. The active-site Schiff-base intermediate with D-ribose 5-phosphate is K90. G162 lines the D-ribose 5-phosphate pocket. R174 lines the D-glyceraldehyde 3-phosphate pocket. Residues G223 and 244–245 (GS) each bind D-ribose 5-phosphate.

Belongs to the PdxS/SNZ family. In the presence of PdxT, forms a dodecamer of heterodimers.

It catalyses the reaction aldehydo-D-ribose 5-phosphate + D-glyceraldehyde 3-phosphate + L-glutamine = pyridoxal 5'-phosphate + L-glutamate + phosphate + 3 H2O + H(+). The protein operates within cofactor biosynthesis; pyridoxal 5'-phosphate biosynthesis. Its function is as follows. Catalyzes the formation of pyridoxal 5'-phosphate from ribose 5-phosphate (RBP), glyceraldehyde 3-phosphate (G3P) and ammonia. The ammonia is provided by the PdxT subunit. Can also use ribulose 5-phosphate and dihydroxyacetone phosphate as substrates, resulting from enzyme-catalyzed isomerization of RBP and G3P, respectively. The sequence is that of Pyridoxal 5'-phosphate synthase subunit PdxS from Mycolicibacterium smegmatis (strain ATCC 700084 / mc(2)155) (Mycobacterium smegmatis).